The following is a 75-amino-acid chain: Small ribosomal subunit protein bS18c (75 aa).

Belongs to the bacterial ribosomal protein bS18 family. As to quaternary structure, part of the 30S ribosomal subunit.

Its subcellular location is the plastid. The protein localises to the chloroplast. The protein is Small ribosomal subunit protein bS18c (rps18) of Anthoceros angustus (Hornwort).